The primary structure comprises 75 residues: uncharacterized protein (75 aa).

A helical transmembrane segment spans residues 4 to 26 (PSLLFLGFSGVLAFGEVGWVGVY).

The protein localises to the membrane. This is an uncharacterized protein from Treponema pallidum (strain Nichols).